Here is an 894-residue protein sequence, read N- to C-terminus: MFTKLMTAIFGSSNDRTLRRLNKRVAQINRLEAEFEKLTDEQLQAKTAEFKQRLAEGATLDSLLHEAFATVREASKRVLGMRHFDVQLIGGMVLTERNIAEMRTGEGKTLTATLPCYLNALTGKGVHVVTVNDYLARRDAETNRPLFEFLGMTVAVNIPGLPSDVKRQAYLADITYATNSELGFDYLRDNLAHSKEERFQRPLHYALVDEVDSILIDEARTPLIISGPAEDATQIYQAIDKVIPHLIAQDKEDTEEYTGDGDFTLDLKSKQAHLTERGQVKVENILTKMGLMHEGESLYHPARISLLHHVYAALRAHKLFEVNVDYIVKDGEIVIIDEHTGRTMAGRRWSDGLHQAIEAKEGVNIQGENQTVASITYQNYFRLYEKLAGMTGTADTEAFEFQQIYGLDTVVIPTNRPMIRDDKTDLMFKSEPEKFQAVIKDIQDCIARKQPVLVGTISIEKSEALSEALKQAGIPHKVLNAKFHAQEAEIVADAGYPGAVTIATNMAGRGTDIVLGGNWKAEIAKLENPTQEQIDEIKAKWQERHDIVMQAGGLHIIGTERHESRRIDNQLRGRSGRQGDPGSSRFYLSLDDALMRIYLNEGKLNMMRKAFTEEGEAMESKLLTKVIASAQAKVEAYNFDGRKQLLQYDDVANEQRKAIYEQRNYLLETDDISAMINTVREDVFNAVIDQYIPPQSIEEMWDVPALENRLKQEFGMELPIVKWLEAEDDLHEETLRERIINIAKEQYQAKEAMVGAEVMRSFEKGVMLQNLDELWKEHLSAMDYLRKGIHLRGYAQKDPKQEYKKESFAMFTDMLDHLKSNVISVLSRIQVRSQEEVEQAERERQAHAEQESSHYHAEGEGQDFSDLHIGRNEPCPCGSGKKYKHCHGSKAKYS.

ATP is bound by residues Q87, G105–T109, and D512. Residues E836 to G870 form a disordered region. 4 residues coordinate Zn(2+): C875, C877, C886, and H887.

The protein belongs to the SecA family. In terms of assembly, monomer and homodimer. Part of the essential Sec protein translocation apparatus which comprises SecA, SecYEG and auxiliary proteins SecDF-YajC and YidC. Zn(2+) is required as a cofactor.

It is found in the cell inner membrane. Its subcellular location is the cytoplasm. It catalyses the reaction ATP + H2O + cellular proteinSide 1 = ADP + phosphate + cellular proteinSide 2.. Functionally, part of the Sec protein translocase complex. Interacts with the SecYEG preprotein conducting channel. Has a central role in coupling the hydrolysis of ATP to the transfer of proteins into and across the cell membrane, serving both as a receptor for the preprotein-SecB complex and as an ATP-driven molecular motor driving the stepwise translocation of polypeptide chains across the membrane. This is Protein translocase subunit SecA from Glaesserella parasuis serovar 5 (strain SH0165) (Haemophilus parasuis).